A 429-amino-acid chain; its full sequence is Formate-dependent phosphoribosylglycinamide formyltransferase (429 aa).

N(1)-(5-phospho-beta-D-ribosyl)glycinamide is bound by residues Glu-26–Leu-27 and Glu-86. ATP contacts are provided by residues Arg-118, Lys-159, Glu-199–Ile-202, and Glu-207. The ATP-grasp domain maps to Glu-123–Leu-319. Residues Glu-276 and Glu-288 each coordinate Mg(2+). N(1)-(5-phospho-beta-D-ribosyl)glycinamide is bound by residues Asp-295, Lys-375, and Arg-382 to Arg-383.

Belongs to the PurK/PurT family. Homodimer.

It catalyses the reaction N(1)-(5-phospho-beta-D-ribosyl)glycinamide + formate + ATP = N(2)-formyl-N(1)-(5-phospho-beta-D-ribosyl)glycinamide + ADP + phosphate + H(+). It functions in the pathway purine metabolism; IMP biosynthesis via de novo pathway; N(2)-formyl-N(1)-(5-phospho-D-ribosyl)glycinamide from N(1)-(5-phospho-D-ribosyl)glycinamide (formate route): step 1/1. Functionally, involved in the de novo purine biosynthesis. Catalyzes the transfer of formate to 5-phospho-ribosyl-glycinamide (GAR), producing 5-phospho-ribosyl-N-formylglycinamide (FGAR). Formate is provided by PurU via hydrolysis of 10-formyl-tetrahydrofolate. The chain is Formate-dependent phosphoribosylglycinamide formyltransferase from Pyrococcus abyssi (strain GE5 / Orsay).